A 143-amino-acid polypeptide reads, in one-letter code: Large ribosomal subunit protein uL15 (143 aa).

The tract at residues 1–56 (MQLNSIKPAAGAKHAKRRVGRGIGSGLGKTAGRGHKGQKSRAGGYHKVGFEGGQMP) is disordered. Over residues 21–31 (RGIGSGLGKTA) the composition is skewed to gly residues.

This sequence belongs to the universal ribosomal protein uL15 family. As to quaternary structure, part of the 50S ribosomal subunit.

In terms of biological role, binds to the 23S rRNA. The protein is Large ribosomal subunit protein uL15 of Verminephrobacter eiseniae (strain EF01-2).